The primary structure comprises 111 residues: Tubulin beta chain (111 aa).

A disordered region spans residues 82–111; sequence SEYQQYQDATAEDEGEFDEEEAEGEGQEYA. Residues 91-111 show a composition bias toward acidic residues; the sequence is TAEDEGEFDEEEAEGEGQEYA.

The protein belongs to the tubulin family. As to quaternary structure, dimer of alpha and beta chains. A typical microtubule is a hollow water-filled tube with an outer diameter of 25 nm and an inner diameter of 15 nM. Alpha-beta heterodimers associate head-to-tail to form protofilaments running lengthwise along the microtubule wall with the beta-tubulin subunit facing the microtubule plus end conferring a structural polarity. Microtubules usually have 13 protofilaments but different protofilament numbers can be found in some organisms and specialized cells. Mg(2+) serves as cofactor.

It is found in the cytoplasm. Its subcellular location is the cytoskeleton. Tubulin is the major constituent of microtubules, a cylinder consisting of laterally associated linear protofilaments composed of alpha- and beta-tubulin heterodimers. Microtubules grow by the addition of GTP-tubulin dimers to the microtubule end, where a stabilizing cap forms. Below the cap, tubulin dimers are in GDP-bound state, owing to GTPase activity of alpha-tubulin. In Lymnaea stagnalis (Great pond snail), this protein is Tubulin beta chain.